The sequence spans 563 residues: Phosphomethylpyrimidine synthase (563 aa).

Substrate contacts are provided by residues asparagine 180, methionine 209, tyrosine 238, histidine 274, 294–296 (SRG), 335–338 (DGLR), and glutamate 374. Histidine 378 is a Zn(2+) binding site. Tyrosine 401 provides a ligand contact to substrate. Histidine 442 is a binding site for Zn(2+). The [4Fe-4S] cluster site is built by cysteine 522, cysteine 525, and cysteine 530.

The protein belongs to the ThiC family. It depends on [4Fe-4S] cluster as a cofactor.

The enzyme catalyses 5-amino-1-(5-phospho-beta-D-ribosyl)imidazole + S-adenosyl-L-methionine = 4-amino-2-methyl-5-(phosphooxymethyl)pyrimidine + CO + 5'-deoxyadenosine + formate + L-methionine + 3 H(+). It functions in the pathway cofactor biosynthesis; thiamine diphosphate biosynthesis. Functionally, catalyzes the synthesis of the hydroxymethylpyrimidine phosphate (HMP-P) moiety of thiamine from aminoimidazole ribotide (AIR) in a radical S-adenosyl-L-methionine (SAM)-dependent reaction. The sequence is that of Phosphomethylpyrimidine synthase from Geobacillus thermodenitrificans (strain NG80-2).